The primary structure comprises 71 residues: MKARELQELRQGSSPQDLQEKVQDLKSELFNLRFQLATGQLENPMRIREVKKSIAQIKTILREKELRAFEQ.

Residues 1 to 20 are disordered; sequence MKARELQELRQGSSPQDLQE.

It belongs to the universal ribosomal protein uL29 family.

This chain is Large ribosomal subunit protein uL29, found in Clostridium kluyveri (strain ATCC 8527 / DSM 555 / NBRC 12016 / NCIMB 10680 / K1).